Consider the following 594-residue polypeptide: RAS guanyl-releasing protein 2-B (594 aa).

The region spanning 3-121 is the N-terminal Ras-GEF domain; sequence SSDLDKGLTI…SLIDIESVPS (119 aa). The 234-residue stretch at 149-382 folds into the Ras-GEF domain; sequence DPAELAEHLT…YQLSLQREPR (234 aa). The segment at 377–403 is disordered; it reads LQREPRARSTQTHAKSPPSPSPPLEEW. EF-hand domains lie at 418–453 and 455–482; these read HIEKMVESVFRLFDEDGDGHISQEEFQSVRSNFPYL and AFNEIDQNQDGKISKQEMTSYFLRASSV. Ca(2+)-binding residues include aspartate 431, aspartate 433, aspartate 435, histidine 437, glutamate 442, aspartate 460, asparagine 462, aspartate 464, lysine 466, and glutamate 471. Residues 490 to 540 form a Phorbol-ester/DAG-type zinc finger; sequence IHNFAERTFLRPVSCQHCRNLILGIYKKGLKCKACGITCHKHCRDHLSIEC.

This sequence belongs to the RASGRP family.

It is found in the cytoplasm. The protein localises to the cytosol. It localises to the cell membrane. Its subcellular location is the synapse. The protein resides in the synaptosome. Its function is as follows. Functions as a calcium- and DAG-regulated nucleotide exchange factor specifically activating Rap through the exchange of bound GDP for GTP. May function in cell aggregation and adhesion. The polypeptide is RAS guanyl-releasing protein 2-B (rasgrp2-b) (Xenopus laevis (African clawed frog)).